Reading from the N-terminus, the 260-residue chain is Cytosolic Fe-S cluster assembly factor Nubp2 homolog 1 (260 aa).

14–21 (GKGGVGKS) contributes to the ATP binding site. Cys-188 and Cys-191 together coordinate [4Fe-4S] cluster.

It belongs to the Mrp/NBP35 ATP-binding proteins family. NUBP2/CFD1 subfamily. Heterotetramer of 2 Nubp1 and 2 Nubp2 chains. The cofactor is [4Fe-4S] cluster.

Its subcellular location is the cytoplasm. Functionally, component of the cytosolic iron-sulfur (Fe/S) protein assembly (CIA) machinery. Required for maturation of extramitochondrial Fe-S proteins. The Nubp1-Nubp2 heterotetramer forms a Fe-S scaffold complex, mediating the de novo assembly of an Fe-S cluster and its transfer to target apoproteins. The polypeptide is Cytosolic Fe-S cluster assembly factor Nubp2 homolog 1 (Drosophila yakuba (Fruit fly)).